We begin with the raw amino-acid sequence, 222 residues long: UPF0758 protein YicR (222 aa).

One can recognise an MPN domain in the interval 100-222 (PLLSPEMTRE…YVSFAERGWI (123 aa)). Zn(2+)-binding residues include H171, H173, and D184. A JAMM motif motif is present at residues 171–184 (HNHPSGCAEPSKAD).

This sequence belongs to the UPF0758 family. YicR subfamily.

The polypeptide is UPF0758 protein YicR (Escherichia coli O45:K1 (strain S88 / ExPEC)).